Here is a 373-residue protein sequence, read N- to C-terminus: MRFGVVFVITQVLADFTYLGCYSSDAISGLTKKDSYTWQSSSHCTEQCSGHAVAALINGQDCYCGDDVPSDNPDGSCTTSCTGYPMEKCGGSDSYSVYVDESEENDDDSSSAQSSHSSTDDATSTSSTSTTSSSSSSLSSSSTSSSSKQSSSPQSSTMSSTDSSPTSSSLSASSTTTSSISSFSFSQSSSSSSTTSSSTPSSESVRITTSVSPGNMQTSIIYITQSVATATSASAAASSSSASSANNRSTGLSKGAKAGIAVGSILGALLLLGLLLLFLFWRRRQRDDRDNLSEKRASSILASSSRQPPAGSRGAAAGIGANRIRIHVRGRQTGHAGHVETVQRRFVAGTLPLEPRCRRIVPDRRFAGGKPRS.

A WSC domain is found at 15 to 101; sequence DFTYLGCYSS…SDSYSVYVDE (87 aa). Disordered regions lie at residues 101–171, 183–210, and 291–316; these read ESEE…SSLS, FSFS…ITTS, and NLSE…RGAA. Low complexity-rich tracts occupy residues 110–171 and 183–204; these read SSAQ…SSLS and FSFS…SSES.

This is an uncharacterized protein from Pichia angusta (Yeast).